A 514-amino-acid chain; its full sequence is Multifunctional alkaline phosphatase superfamily protein PehA (514 aa).

Residues aspartate 12, cysteine 57, aspartate 324, and histidine 325 each coordinate Mn(2+). Cysteine 57 serves as the catalytic Nucleophile. Cysteine 57 is subject to 3-oxoalanine (Cys).

Belongs to the alkaline phosphatase superfamily. Homotetramer. Mn(2+) serves as cofactor. Post-translationally, the conversion to 3-oxoalanine (also known as C-formylglycine, FGly), of a serine or cysteine residue in prokaryotes and of a cysteine residue in eukaryotes, is critical for catalytic activity. Phosphate triester hydrolytic activity is retained with unmodified cysteine acting as a nucleophile.

With respect to regulation, anions including Cl(-) and CH3COO(-), and SO4(2-) salts stimulate activity 20-40% at 100 mM. In terms of biological role, hydrolytic enzyme with a broad substrate specificity acting on phosphate diesters and phosphonate monoesters. Hydrolyzes phosphate mono- and triesters, sulfate monoesters and sulfonate monoesters. Hydrolyzes glyphosate monoesters. Does not hydrolyze DNA or cGMP. Hydrolyzes glyceryl glyphosate, but this substrate has a much lower affinity than the glyphosate monoesters. This chain is Multifunctional alkaline phosphatase superfamily protein PehA, found in Trinickia caryophylli (Paraburkholderia caryophylli).